We begin with the raw amino-acid sequence, 299 residues long: Hemolysin C homolog (299 aa).

CBS domains are found at residues 80 to 142 (MVPR…NGRL) and 145 to 202 (LIRK…IDDE).

Belongs to the UPF0053 family. Hemolysin C subfamily.

The protein is Hemolysin C homolog (tlyC) of Rickettsia rickettsii (strain Sheila Smith).